The sequence spans 616 residues: 2-isopropylmalate synthase (616 aa).

The interval 1 to 34 is disordered; sequence MSPNDAFISAPAKIETPVGPRNEGQPAWNKQRGS. Positions 67–341 constitute a Pyruvate carboxyltransferase domain; that stretch reads PQWCAVDLRD…DPQLDFTDIR (275 aa). The Mg(2+) site is built by D76, H280, H282, and N316. The segment at 490-616 is regulatory domain; sequence RTAPVEQIAL…NHEAVLAGGV (127 aa).

This sequence belongs to the alpha-IPM synthase/homocitrate synthase family. LeuA type 2 subfamily. In terms of assembly, homodimer. Mg(2+) is required as a cofactor.

It localises to the cytoplasm. It catalyses the reaction 3-methyl-2-oxobutanoate + acetyl-CoA + H2O = (2S)-2-isopropylmalate + CoA + H(+). Its pathway is amino-acid biosynthesis; L-leucine biosynthesis; L-leucine from 3-methyl-2-oxobutanoate: step 1/4. Inhibited by L-leucine, the pathway end product. In terms of biological role, catalyzes the condensation of the acetyl group of acetyl-CoA with 3-methyl-2-oxobutanoate (2-ketoisovalerate) to form 3-carboxy-3-hydroxy-4-methylpentanoate (2-isopropylmalate). Complements an E.coli leuA deletion. This Corynebacterium glutamicum (strain ATCC 13032 / DSM 20300 / JCM 1318 / BCRC 11384 / CCUG 27702 / LMG 3730 / NBRC 12168 / NCIMB 10025 / NRRL B-2784 / 534) protein is 2-isopropylmalate synthase.